The chain runs to 489 residues: UDP-N-acetylmuramate--L-alanine ligase (489 aa).

128-134 serves as a coordination point for ATP; that stretch reads GTHGKTT.

Belongs to the MurCDEF family.

It is found in the cytoplasm. It carries out the reaction UDP-N-acetyl-alpha-D-muramate + L-alanine + ATP = UDP-N-acetyl-alpha-D-muramoyl-L-alanine + ADP + phosphate + H(+). Its pathway is cell wall biogenesis; peptidoglycan biosynthesis. In terms of biological role, cell wall formation. The protein is UDP-N-acetylmuramate--L-alanine ligase of Shewanella sediminis (strain HAW-EB3).